The primary structure comprises 882 residues: Ubiquitin carboxyl-terminal hydrolase 4 (882 aa).

Residues 182-308 enclose the Rhodanese domain; it reads YDSSLLLIDV…WVSKKGACET (127 aa). The segment covering 382 to 399 has biased composition (low complexity); the sequence is KAKSSSTSSVTSSSPAPS. Positions 382-411 are disordered; that stretch reads KAKSSSTSSVTSSSPAPSQLVRPQTSSMPP. Polar residues predominate over residues 402–411; it reads VRPQTSSMPP. The USP domain occupies 519–879; that stretch reads VGLENMGNSC…NAYVLFYHRV (361 aa). Catalysis depends on Cys528, which acts as the Nucleophile. Residue His836 is the Proton acceptor of the active site.

The protein belongs to the peptidase C19 family.

The protein localises to the cytoplasm. Its subcellular location is the late endosome membrane. It carries out the reaction Thiol-dependent hydrolysis of ester, thioester, amide, peptide and isopeptide bonds formed by the C-terminal Gly of ubiquitin (a 76-residue protein attached to proteins as an intracellular targeting signal).. Its activity is regulated as follows. RFU1 is an inhibitor of deubiquitination activity. Its function is as follows. Ubiquitin thioesterase that acts at the late endosome/prevacuolar compartment to recover ubiquitin from ubiquitinated membrane proteins en route to the vacuole. Also removes ubiquitin from soluble proteins targeted to proteasomes. Is essential to maintain a normal level of free ubiquitin. Required for promoting coordination of DNA replication and avoids DNA overreplication. This Vanderwaltozyma polyspora (strain ATCC 22028 / DSM 70294 / BCRC 21397 / CBS 2163 / NBRC 10782 / NRRL Y-8283 / UCD 57-17) (Kluyveromyces polysporus) protein is Ubiquitin carboxyl-terminal hydrolase 4 (DOA4).